Consider the following 63-residue polypeptide: Large ribosomal subunit protein uL30 (63 aa).

It belongs to the universal ribosomal protein uL30 family. As to quaternary structure, part of the 50S ribosomal subunit.

The sequence is that of Large ribosomal subunit protein uL30 from Natranaerobius thermophilus (strain ATCC BAA-1301 / DSM 18059 / JW/NM-WN-LF).